The following is a 185-amino-acid chain: Protein GrpE (185 aa).

Residues M1 to N12 show a composition bias toward basic and acidic residues. Positions M1–A22 are disordered.

This sequence belongs to the GrpE family. As to quaternary structure, homodimer.

It is found in the cytoplasm. Functionally, participates actively in the response to hyperosmotic and heat shock by preventing the aggregation of stress-denatured proteins, in association with DnaK and GrpE. It is the nucleotide exchange factor for DnaK and may function as a thermosensor. Unfolded proteins bind initially to DnaJ; upon interaction with the DnaJ-bound protein, DnaK hydrolyzes its bound ATP, resulting in the formation of a stable complex. GrpE releases ADP from DnaK; ATP binding to DnaK triggers the release of the substrate protein, thus completing the reaction cycle. Several rounds of ATP-dependent interactions between DnaJ, DnaK and GrpE are required for fully efficient folding. In Pseudomonas putida (strain ATCC 700007 / DSM 6899 / JCM 31910 / BCRC 17059 / LMG 24140 / F1), this protein is Protein GrpE.